The primary structure comprises 83 residues: Mu-theraphotoxin-Hhn2c (83 aa).

The signal sequence occupies residues 1–21 (MKASMFLALAGLVLLFVVGYA). Residues 22 to 48 (SESEEKEFPIELLSKIFAVDVFKGEER) constitute a propeptide that is removed on maturation. Cystine bridges form between Cys50-Cys65, Cys57-Cys70, and Cys64-Cys77. At Leu81 the chain carries Leucine amide.

Belongs to the neurotoxin 10 (Hwtx-1) family. 15 (Hntx-3) subfamily. In terms of assembly, monomer. In terms of tissue distribution, expressed by the venom gland.

It localises to the secreted. Lethal neurotoxin. Selectively blocks tetrodotoxin-sensitive voltage-gated sodium channels (Nav). Does not affect tetrodotoxin-resistant voltage-gated sodium channels or calcium channels. The polypeptide is Mu-theraphotoxin-Hhn2c (Cyriopagopus hainanus (Chinese bird spider)).